The following is a 206-amino-acid chain: Small ribosomal subunit protein uS4 (206 aa).

An S4 RNA-binding domain is found at 96–158 (GRLDNVVYRM…AKQQSRIKAA (63 aa)).

This sequence belongs to the universal ribosomal protein uS4 family. In terms of assembly, part of the 30S ribosomal subunit. Contacts protein S5. The interaction surface between S4 and S5 is involved in control of translational fidelity.

One of the primary rRNA binding proteins, it binds directly to 16S rRNA where it nucleates assembly of the body of the 30S subunit. In terms of biological role, with S5 and S12 plays an important role in translational accuracy. The protein is Small ribosomal subunit protein uS4 of Vibrio atlanticus (strain LGP32) (Vibrio splendidus (strain Mel32)).